The following is a 437-amino-acid chain: Aspartate--tRNA(Asp/Asn) ligase (437 aa).

An L-aspartate-binding site is contributed by E175. Positions 197–200 are aspartate; that stretch reads QLYK. L-aspartate is bound at residue R219. ATP is bound by residues 219 to 221, 227 to 229, and E360; these read RAE and RHL. The Mg(2+) site is built by E360 and S363. 2 residues coordinate L-aspartate: S363 and R367. 408–411 contacts ATP; it reads GAER.

Belongs to the class-II aminoacyl-tRNA synthetase family. Type 2 subfamily. Homodimer. Mg(2+) is required as a cofactor.

It localises to the cytoplasm. It carries out the reaction tRNA(Asx) + L-aspartate + ATP = L-aspartyl-tRNA(Asx) + AMP + diphosphate. Its function is as follows. Aspartyl-tRNA synthetase with relaxed tRNA specificity since it is able to aspartylate not only its cognate tRNA(Asp) but also tRNA(Asn). Reaction proceeds in two steps: L-aspartate is first activated by ATP to form Asp-AMP and then transferred to the acceptor end of tRNA(Asp/Asn). The sequence is that of Aspartate--tRNA(Asp/Asn) ligase from Methanothermobacter thermautotrophicus (strain ATCC 29096 / DSM 1053 / JCM 10044 / NBRC 100330 / Delta H) (Methanobacterium thermoautotrophicum).